A 344-amino-acid chain; its full sequence is tRNA N6-adenosine threonylcarbamoyltransferase (344 aa).

Fe cation-binding residues include histidine 111 and histidine 115. Residues 134-138, aspartate 167, glycine 180, and asparagine 274 contribute to the substrate site; that span reads LVSGG. Aspartate 302 contacts Fe cation.

This sequence belongs to the KAE1 / TsaD family. Fe(2+) serves as cofactor.

It localises to the cytoplasm. It carries out the reaction L-threonylcarbamoyladenylate + adenosine(37) in tRNA = N(6)-L-threonylcarbamoyladenosine(37) in tRNA + AMP + H(+). Functionally, required for the formation of a threonylcarbamoyl group on adenosine at position 37 (t(6)A37) in tRNAs that read codons beginning with adenine. Is involved in the transfer of the threonylcarbamoyl moiety of threonylcarbamoyl-AMP (TC-AMP) to the N6 group of A37, together with TsaE and TsaB. TsaD likely plays a direct catalytic role in this reaction. This chain is tRNA N6-adenosine threonylcarbamoyltransferase, found in Dechloromonas aromatica (strain RCB).